Here is a 665-residue protein sequence, read N- to C-terminus: Probable potassium transport system protein Kup 2 (665 aa).

Transmembrane regions (helical) follow at residues 13-33 (GLLVSIGIVYGDIGTSPLYVM), 55-75 (ISLILWTITLLTTVKYVLIAL), 98-118 (WLVLPALIGGAALLADGTLTP), 138-158 (IPVPNQNSVLIITIIILLFLF), 167-187 (IIGKTFGPIMLIWFTFLGLTG), 195-215 (LSLLEALNPVLAVKILFSPAN), 217-237 (VGVLILGAVFLATTGAEALYS), 250-270 (SWPYVFICLALNYLGQGVWIL), 295-315 (FFAIILATLAAIIASQALITG), 344-364 (IFIPSINKMLCAATIGIVFLF), 375-395 (GLAITVTMLMTTILLFEYLSL), 400-420 (ILLRLVFLFLFGAIESMFLIS), and 428-448 (GGYVTVIIAAFIGAIMYIWYF).

It belongs to the HAK/KUP transporter (TC 2.A.72) family.

Its subcellular location is the cell membrane. It catalyses the reaction K(+)(in) + H(+)(in) = K(+)(out) + H(+)(out). Its function is as follows. Transport of potassium into the cell. Likely operates as a K(+):H(+) symporter. The polypeptide is Probable potassium transport system protein Kup 2 (Lactobacillus johnsonii (strain CNCM I-12250 / La1 / NCC 533)).